Consider the following 111-residue polypeptide: uncharacterized protein (111 aa).

A disordered region spans residues 1–85 (MTGLMKAFQK…TSSREDEQKL (85 aa)). Residues 11-23 (LSPTKRQYAEITQ) show a composition bias toward polar residues. Over residues 24-42 (SNSSISSSSSGSKYNDSSS) the composition is skewed to low complexity. A compositionally biased stretch (polar residues) spans 56–77 (ARASTSTQAQKPASSQQKGGTS).

This is an uncharacterized protein from Microplitis demolitor (Parasitoid wasp).